A 169-amino-acid chain; its full sequence is Inorganic pyrophosphatase (169 aa).

Met1 carries the post-translational modification N-formylmethionine. The substrate site is built by Lys28, Arg42, and Tyr54. Mg(2+) is bound by residues Asp64, Asp69, and Asp101. Residue Tyr138 coordinates substrate.

It belongs to the PPase family. In terms of assembly, homohexamer. Mg(2+) serves as cofactor.

It is found in the cytoplasm. It carries out the reaction diphosphate + H2O = 2 phosphate + H(+). Catalyzes the hydrolysis of inorganic pyrophosphate (PPi) forming two phosphate ions. This chain is Inorganic pyrophosphatase, found in Nostoc sp. (strain PCC 7120 / SAG 25.82 / UTEX 2576).